We begin with the raw amino-acid sequence, 95 residues long: Small ribosomal subunit protein uS17 (95 aa).

It belongs to the universal ribosomal protein uS17 family. As to quaternary structure, part of the 30S ribosomal subunit.

One of the primary rRNA binding proteins, it binds specifically to the 5'-end of 16S ribosomal RNA. This chain is Small ribosomal subunit protein uS17, found in Synechococcus sp. (strain CC9902).